The following is a 287-amino-acid chain: HTH-type transcriptional regulator MurR (287 aa).

Positions 1-77 (MLYLAKMRNA…MALIEEYSVN (77 aa)) constitute an HTH rpiR-type domain. Positions 37-56 (SRNLAKQLEVSQSSIVKFAQ) form a DNA-binding region, H-T-H motif. In terms of domain architecture, SIS spans 128-268 (VINLISKARL…FVGMVQLNDV (141 aa)).

In terms of assembly, homotetramer.

It participates in amino-sugar metabolism; N-acetylmuramate degradation [regulation]. Functionally, represses the expression of the murPQ operon involved in the uptake and degradation of N-acetylmuramic acid (MurNAc). Binds to two adjacent inverted repeats within the operator region. MurNAc 6-phosphate, the substrate of MurQ, is the specific inducer that weakens binding of MurR to the operator. The sequence is that of HTH-type transcriptional regulator MurR from Citrobacter koseri (strain ATCC BAA-895 / CDC 4225-83 / SGSC4696).